The sequence spans 103 residues: MRLKESIIFIGVFSFIVGIFLSLIAVTSHNDPNQYVKIEVQSGDTLWGLADQVNDSKSIDKNAFIDWVTQHNDLASTEIQPGDILVIPVKKEHPFVYQLATVQ.

Positions 36 to 87 constitute a LysM domain; that stretch reads VKIEVQSGDTLWGLADQVNDSKSIDKNAFIDWVTQHNDLASTEIQPGDILVI.

This sequence belongs to the YneA family.

It localises to the cytoplasm. In terms of biological role, inhibits cell division during the SOS response. Affects a later stage of the cell division protein assembly, after the assembly of the Z ring, by probably suppressing recruitment of FtsL and/or DivIC to the division machinery. In Bacillus pumilus (strain SAFR-032), this protein is Cell division suppressor protein YneA.